The following is a 212-amino-acid chain: MKLSKYIDHTLLKPQATEKDILKLIEEAKTYDFASVCVNPSWVKLAYENLKDTNVKVCTVVGFPLGATSIASKVYETKVAIEDGADEIDMVIAVGQLKSGNDEYVKEEIKKIVEASKDKLVKVIIETCLLTEEEKVKACTLSKEAGADYVKTSTGFSTGGAKPEDIKLMREAVGKDMGVKASGGIHTREEMEVMIENGATRIGASCGVELVK.

The Proton donor/acceptor role is filled by Asp-89. The active-site Schiff-base intermediate with acetaldehyde is the Lys-151. The Proton donor/acceptor role is filled by Lys-180.

It belongs to the DeoC/FbaB aldolase family. DeoC type 1 subfamily.

It localises to the cytoplasm. The catalysed reaction is 2-deoxy-D-ribose 5-phosphate = D-glyceraldehyde 3-phosphate + acetaldehyde. It functions in the pathway carbohydrate degradation; 2-deoxy-D-ribose 1-phosphate degradation; D-glyceraldehyde 3-phosphate and acetaldehyde from 2-deoxy-alpha-D-ribose 1-phosphate: step 2/2. In terms of biological role, catalyzes a reversible aldol reaction between acetaldehyde and D-glyceraldehyde 3-phosphate to generate 2-deoxy-D-ribose 5-phosphate. The chain is Deoxyribose-phosphate aldolase from Clostridium botulinum (strain Loch Maree / Type A3).